We begin with the raw amino-acid sequence, 162 residues long: MIHFVLLVSRQGKVRLTKWYSPYAQKERSKVIRELSGVILNRGPKLCNFVEWRGYKVVYKRYASLYFCMCIDQEDNELEVLEIIHHYVEILDRYFGSVCELDLIFNFHKAYYILDELLIAGELQESSKKTVARIISAQDQLVEVAKEEASSISNIIAQATNR.

This sequence belongs to the adaptor complexes small subunit family. In terms of assembly, adaptor protein complex 1 (AP-1) is a heterotetramer composed of two large adaptins (gamma-type subunit and beta-type subunit), a medium adaptin (mu-type subunit) and a small adaptin (sigma-type subunit). As to expression, expressed in roots, stems, leaves, flowers and siliques (developing fruits and seeds).

It is found in the golgi apparatus. It localises to the cytoplasmic vesicle. Its subcellular location is the clathrin-coated vesicle membrane. Its function is as follows. Subunit of clathrin-associated adaptor protein complex 1 that plays a role in protein sorting at the trans-Golgi network and early endosomes (TGN/EE). The AP complexes mediate the recruitment of clathrin to membranes and the recognition of sorting signals within the cytosolic tails of transmembrane cargo molecules. The polypeptide is AP-1 complex subunit sigma-2 (AAP19-2) (Arabidopsis thaliana (Mouse-ear cress)).